Reading from the N-terminus, the 887-residue chain is DNA gyrase subunit A (887 aa).

Positions 35 to 501 (LPDVRDGLKP…GFENLEDEDL (467 aa)) constitute a Topo IIA-type catalytic domain. Y123 serves as the catalytic O-(5'-phospho-DNA)-tyrosine intermediate. Residues 528-534 (QNRGGRG) carry the GyrA-box motif. A disordered region spans residues 811 to 864 (KEDAEDETNEDEQSTSTVSEDGTEQQREAVVNDETPGNAIHTEVIDSEENDEDG). Residues 813–823 (DAEDETNEDEQ) show a composition bias toward acidic residues.

This sequence belongs to the type II topoisomerase GyrA/ParC subunit family. In terms of assembly, heterotetramer, composed of two GyrA and two GyrB chains. In the heterotetramer, GyrA contains the active site tyrosine that forms a transient covalent intermediate with DNA, while GyrB binds cofactors and catalyzes ATP hydrolysis.

The protein resides in the cytoplasm. The catalysed reaction is ATP-dependent breakage, passage and rejoining of double-stranded DNA.. A type II topoisomerase that negatively supercoils closed circular double-stranded (ds) DNA in an ATP-dependent manner to modulate DNA topology and maintain chromosomes in an underwound state. Negative supercoiling favors strand separation, and DNA replication, transcription, recombination and repair, all of which involve strand separation. Also able to catalyze the interconversion of other topological isomers of dsDNA rings, including catenanes and knotted rings. Type II topoisomerases break and join 2 DNA strands simultaneously in an ATP-dependent manner. The protein is DNA gyrase subunit A of Staphylococcus aureus (strain COL).